The following is a 759-amino-acid chain: Tripartite motif-containing protein 46 (759 aa).

Residues Met-1–Val-166 are required for proximal axon localization, axon formation and migration. The RING-type 1; degenerate zinc finger occupies Cys-33–Glu-59. Residues Ile-67–Lys-98 are disordered. Low complexity predominate over residues Pro-73–Pro-89. The RING-type 2; degenerate zinc-finger motif lies at Cys-172–Lys-231. The B box-type zinc-finger motif lies at Pro-222 to Val-263. Residues Cys-227, His-230, Cys-249, and His-255 each coordinate Zn(2+). A coiled-coil region spans residues Glu-294–Arg-400. Ser-330 carries the phosphoserine modification. The COS domain occupies Leu-370–Leu-427. Residues Gln-411–Val-429 form a required for microtubule association, proximal axon localization and axon formation region. The Fibronectin type-III domain maps to Val-429 to Ala-528. One can recognise a B30.2/SPRY domain in the interval Gly-513–Glu-747. Ser-627 carries the post-translational modification Phosphoserine.

Belongs to the TRIM/RBCC family. As to quaternary structure, interacts with TUBB3 and TUBA4A. Expressed in primary hippocampal and cortical neurons.

It is found in the cell projection. The protein resides in the axon. The protein localises to the cytoplasm. Its subcellular location is the cytoskeleton. Functionally, microtubule-associated protein that is involved in the formation of parallel microtubule bundles linked by cross-bridges in the proximal axon. Required for the uniform orientation and maintenance of the parallel microtubule fascicles, which are important for efficient cargo delivery and trafficking in axons. Thereby also required for proper axon specification, the establishment of neuronal polarity and proper neuronal migration. In Rattus norvegicus (Rat), this protein is Tripartite motif-containing protein 46.